We begin with the raw amino-acid sequence, 285 residues long: Nucleotide-binding protein CD630_34000 (285 aa).

ATP is bound at residue 8-15 (GLSGSGKS). 59–62 (DIRG) provides a ligand contact to GTP.

It belongs to the RapZ-like family.

In terms of biological role, displays ATPase and GTPase activities. In Clostridioides difficile (strain 630) (Peptoclostridium difficile), this protein is Nucleotide-binding protein CD630_34000.